Consider the following 311-residue polypeptide: Small ribosomal subunit biogenesis GTPase RsgA (311 aa).

The 159-residue stretch at 88 to 246 (SKEKEQVIVA…VIDTPGIREF (159 aa)) folds into the CP-type G domain. GTP is bound by residues 137–140 (NKID) and 188–196 (GHSGVGKST). The Zn(2+) site is built by Cys-270, Cys-275, His-277, and Cys-283.

This sequence belongs to the TRAFAC class YlqF/YawG GTPase family. RsgA subfamily. In terms of assembly, monomer. Associates with 30S ribosomal subunit, binds 16S rRNA. The cofactor is Zn(2+).

It is found in the cytoplasm. In terms of biological role, one of several proteins that assist in the late maturation steps of the functional core of the 30S ribosomal subunit. Helps release RbfA from mature subunits. May play a role in the assembly of ribosomal proteins into the subunit. Circularly permuted GTPase that catalyzes slow GTP hydrolysis, GTPase activity is stimulated by the 30S ribosomal subunit. In Chlorobaculum tepidum (strain ATCC 49652 / DSM 12025 / NBRC 103806 / TLS) (Chlorobium tepidum), this protein is Small ribosomal subunit biogenesis GTPase RsgA.